The primary structure comprises 87 residues: Small ribosomal subunit protein bS18 (87 aa).

Residues 1 to 20 (MAGKSSGDRRKPIRKGKDGK) show a composition bias toward basic and acidic residues. The tract at residues 1–24 (MAGKSSGDRRKPIRKGKDGKNAAP) is disordered.

It belongs to the bacterial ribosomal protein bS18 family. Part of the 30S ribosomal subunit. Forms a tight heterodimer with protein bS6.

Binds as a heterodimer with protein bS6 to the central domain of the 16S rRNA, where it helps stabilize the platform of the 30S subunit. The polypeptide is Small ribosomal subunit protein bS18 (Leifsonia xyli subsp. xyli (strain CTCB07)).